We begin with the raw amino-acid sequence, 347 residues long: MCTKMEQPFYHDDSYTATGYGRAPGGLSLHDYKLLKPSLAVNLADPYRSLKAPGARGPGPEGGGGGSYFSGQGSDTGASLKLASSELERLIVPNSNGVITTTPTPPGQYFYPRGGGSGGGAGGAGGGVTEEQEGFADGFVKALDDLHKMNHVTPPNVSLGATGGPPAGPGGVYAGPEPPPVYTNLSSYSPASASSGGAGAAVGTGSSYPTTTISYLPHAPPFAGGHPAQLGLGRGASTFKEEPQTVPEARSRDATPPVSPINMEDQERIKVERKRLRNRLAATKCRKRKLERIARLEDKVKTLKAENAGLSSTAGLLREQVAQLKQKVMTHVSNGCQLLLGVKGHAF.

Glycyl lysine isopeptide (Lys-Gly) (interchain with G-Cter in SUMO2) cross-links involve residues Lys-4, Lys-33, and Lys-36. The tract at residues 51 to 73 (KAPGARGPGPEGGGGGSYFSGQG) is disordered. The segment covering 56-68 (RGPGPEGGGGGSY) has biased composition (gly residues). Lys-81 is covalently cross-linked (Glycyl lysine isopeptide (Lys-Gly) (interchain with G-Cter in SUMO2)). Phosphothreonine is present on residues Thr-102 and Thr-104. A Phosphoserine modification is found at Ser-117. Lys-141 participates in a covalent cross-link: Glycyl lysine isopeptide (Lys-Gly) (interchain with G-Cter in SUMO2). A compositionally biased stretch (basic and acidic residues) spans 239-253 (FKEEPQTVPEARSRD). Positions 239–260 (FKEEPQTVPEARSRDATPPVSP) are disordered. The residue at position 240 (Lys-240) is an N6-acetyllysine; alternate. A Glycyl lysine isopeptide (Lys-Gly) (interchain with G-Cter in SUMO1); alternate cross-link involves residue Lys-240. Residue Lys-240 forms a Glycyl lysine isopeptide (Lys-Gly) (interchain with G-Cter in SUMO2); alternate linkage. Position 251 is a phosphoserine (Ser-251). The residue at position 255 (Thr-255) is a Phosphothreonine. Ser-259 is modified (phosphoserine). Residues 268-295 (RIKVERKRLRNRLAATKCRKRKLERIAR) are basic motif. The bZIP domain occupies 268 to 331 (RIKVERKRLR…AQLKQKVMTH (64 aa)). A leucine-zipper region spans residues 296–324 (LEDKVKTLKAENAGLSSTAGLLREQVAQL). Residue Lys-343 forms a Glycyl lysine isopeptide (Lys-Gly) (interchain with G-Cter in SUMO2) linkage.

This sequence belongs to the bZIP family. Jun subfamily. As to quaternary structure, binds DNA as a homodimer or as a heterodimer with another member of the Jun/Fos family. Component of an AP-1 transcription factor complex composed of JUN-FOS heterodimers composed of JUN-FOS heterodimers. As part of the AP-1 transcription factor complex, forms heterodimers with FOSB, thereby binding to the AP-1 consensus sequence and stimulating transcription. Interacts with ITCH (via its WW domains). Ubiquitinated by ITCH, leading to its degradation.

The protein localises to the nucleus. Functionally, transcription factor involved in regulating gene activity following the primary growth factor response. Binds to the DNA sequence 5'-TGA[GC]TCA-3'. Heterodimerizes with proteins of the FOS family to form an AP-1 transcription complex, thereby enhancing its DNA binding activity to an AP-1 consensus sequence and its transcriptional activity. This is Transcription factor JunB (JUNB) from Homo sapiens (Human).